The sequence spans 527 residues: Triostin synthetase I (527 aa).

187–188 (GG) contributes to the ATP binding site. 230 to 231 (HQ) provides a ligand contact to substrate. ATP contacts are provided by residues 300–302 (SAP), aspartate 406, arginine 421, and lysine 512. Lysine 512 is a binding site for substrate.

The protein belongs to the ATP-dependent AMP-binding enzyme family. In terms of assembly, monomer.

Involved in triostin biosynthesis. Activates quinoxaline-2-carboxylic acid (QA) via catalysis of the ATP-pyrophosphate exchange reaction dependent on QA, and the formation of the corresponding adenylate. Also activates structural analogs of QA such as quinoline-2-carboxylic acid and thieno[3,2-b]pyridine-5-carboxylic acid, but not quinoline-3-carboxylic acid, quinoline-4-carboxylic acid, pyridine-2-carboxylic acid or 2-pyrazinecarboxylic acid. The polypeptide is Triostin synthetase I (trsA) (Streptomyces triostinicus).